The sequence spans 363 residues: tRNA U34 carboxymethyltransferase (363 aa).

Residues K101, W134, K139, G159, 181-183 (DPS), 221-222 (LE), M237, Y241, and R356 each bind carboxy-S-adenosyl-L-methionine.

Belongs to the class I-like SAM-binding methyltransferase superfamily. CmoB family. As to quaternary structure, homotetramer.

It carries out the reaction carboxy-S-adenosyl-L-methionine + 5-hydroxyuridine(34) in tRNA = 5-carboxymethoxyuridine(34) in tRNA + S-adenosyl-L-homocysteine + H(+). Its function is as follows. Catalyzes carboxymethyl transfer from carboxy-S-adenosyl-L-methionine (Cx-SAM) to 5-hydroxyuridine (ho5U) to form 5-carboxymethoxyuridine (cmo5U) at position 34 in tRNAs. This chain is tRNA U34 carboxymethyltransferase, found in Psychrobacter cryohalolentis (strain ATCC BAA-1226 / DSM 17306 / VKM B-2378 / K5).